A 153-amino-acid chain; its full sequence is Insulin-like growth factor 1 (153 aa).

Residues 49–77 (GPETLCGAELVDALQFVCGPRGFYFNKPT) form a b region. 3 cysteine pairs are disulfide-bonded: C54–C96, C66–C109, and C95–C100. A c region spans residues 78–89 (GYGSSIRRAPQT). The segment at 90 to 110 (GIVDECCFRSCDLRRLEMYCA) is a. The d stretch occupies residues 111-118 (PLKPTKAA). Positions 119–153 (RSIRAQRHTDMPKTQKEVHLKNTSRGSAGNKTYRM) are cleaved as a propeptide — e peptide. Residues 120-153 (SIRAQRHTDMPKTQKEVHLKNTSRGSAGNKTYRM) form a disordered region. Basic and acidic residues predominate over residues 125–138 (RHTDMPKTQKEVHL). Polar residues predominate over residues 139 to 153 (KNTSRGSAGNKTYRM).

This sequence belongs to the insulin family. Forms a ternary complex with IGFR1 and ITGAV:ITGB3. Forms a ternary complex with IGFR1 and ITGA6:ITGB4. Interacts with SH2D3C isoform 2. Forms a ternary complex with IGFBP3 and ALS.

Its subcellular location is the secreted. Functionally, the insulin-like growth factors, isolated from plasma, are structurally and functionally related to insulin but have a much higher growth-promoting activity. May be a physiological regulator of [1-14C]-2-deoxy-D-glucose (2DG) transport and glycogen synthesis in osteoblasts. Stimulates glucose transport in bone-derived osteoblastic (PyMS) cells and is effective at much lower concentrations than insulin, not only regarding glycogen and DNA synthesis but also with regard to enhancing glucose uptake. May play a role in synapse maturation. Ca(2+)-dependent exocytosis of IGF1 is required for sensory perception of smell in the olfactory bulb. Acts as a ligand for IGF1R. Binds to the alpha subunit of IGF1R, leading to the activation of the intrinsic tyrosine kinase activity which autophosphorylates tyrosine residues in the beta subunit thus initiating a cascade of down-stream signaling events leading to activation of the PI3K-AKT/PKB and the Ras-MAPK pathways. Binds to integrins ITGAV:ITGB3 and ITGA6:ITGB4. Its binding to integrins and subsequent ternary complex formation with integrins and IGFR1 are essential for IGF1 signaling. Induces the phosphorylation and activation of IGFR1, MAPK3/ERK1, MAPK1/ERK2 and AKT1. As part of the MAPK/ERK signaling pathway, acts as a negative regulator of apoptosis in cardiomyocytes via promotion of STUB1/CHIP-mediated ubiquitination and degradation of ICER-type isoforms of CREM. The chain is Insulin-like growth factor 1 from Mus musculus (Mouse).